A 133-amino-acid chain; its full sequence is CDGSH iron-sulfur domain-containing protein 2 homolog (133 aa).

Over 1 to 35 (MQSVSQVVKTSLPNYLSSLPVPDTFGGWFKLSFKD) the chain is Lumenal. A helical membrane pass occupies residues 36-58 (WLALIPPTAVVVGIGYVTYRAFY). The Cytoplasmic segment spans residues 59-133 (PKAHRTCKSG…NVGPIVIKKK (75 aa)). Positions 99, 101, 110, and 114 each coordinate [2Fe-2S] cluster.

This sequence belongs to the CISD protein family. CISD2 subfamily. [2Fe-2S] cluster is required as a cofactor.

The protein resides in the endoplasmic reticulum membrane. The chain is CDGSH iron-sulfur domain-containing protein 2 homolog from Drosophila virilis (Fruit fly).